Reading from the N-terminus, the 389-residue chain is Probable dual-specificity RNA methyltransferase RlmN (389 aa).

Positions 1–23 are disordered; that stretch reads MTTQHPDTPETGITPGGTSGAFR. The Proton acceptor role is filled by Glu127. The Radical SAM core domain occupies 133 to 376; it reads YPTRTTLCIS…ATLRDTRGQD (244 aa). An intrachain disulfide couples Cys140 to Cys381. The [4Fe-4S] cluster site is built by Cys147, Cys151, and Cys154. Residues 202 to 203, Ser236, 259 to 261, and Asn338 contribute to the S-adenosyl-L-methionine site; these read GE and SLH. Cys381 serves as the catalytic S-methylcysteine intermediate.

Belongs to the radical SAM superfamily. RlmN family. [4Fe-4S] cluster is required as a cofactor.

Its subcellular location is the cytoplasm. The catalysed reaction is adenosine(2503) in 23S rRNA + 2 reduced [2Fe-2S]-[ferredoxin] + 2 S-adenosyl-L-methionine = 2-methyladenosine(2503) in 23S rRNA + 5'-deoxyadenosine + L-methionine + 2 oxidized [2Fe-2S]-[ferredoxin] + S-adenosyl-L-homocysteine. It carries out the reaction adenosine(37) in tRNA + 2 reduced [2Fe-2S]-[ferredoxin] + 2 S-adenosyl-L-methionine = 2-methyladenosine(37) in tRNA + 5'-deoxyadenosine + L-methionine + 2 oxidized [2Fe-2S]-[ferredoxin] + S-adenosyl-L-homocysteine. Functionally, specifically methylates position 2 of adenine 2503 in 23S rRNA and position 2 of adenine 37 in tRNAs. In Bifidobacterium longum (strain NCC 2705), this protein is Probable dual-specificity RNA methyltransferase RlmN.